Reading from the N-terminus, the 243-residue chain is MCPADQTVATNNNDHLVQSEDPEHPANLIPELCRKFYNWGWVTGTGGGTSIRQGDHIFIAPSGVQKELMQPHNIFVLQWPTPKYPASERNYIRKPLKLNPSACTPLFLTAFEQGAGCCIHTHSQWAVLVTLLVEREKGPDACFEISNIEQIKGIPRGKGKGMLGFFDTLKIPIIENTAFEEDLTSGLEAAMNKYPDAYAVLVRRHGIYVWGDNTAKAKTQCESLDYIFQLAVEMHKLGLPWVK.

Residues 1-22 form a disordered region; it reads MCPADQTVATNNNDHLVQSEDP. The span at 7-16 shows a compositional bias: polar residues; that stretch reads TVATNNNDHL. Residue cysteine 103 participates in substrate binding. Residues histidine 120 and histidine 122 each contribute to the Zn(2+) site. The active-site Proton donor/acceptor is the glutamate 149. Zn(2+) is bound at residue histidine 205.

Belongs to the aldolase class II family. MtnB subfamily. The cofactor is Zn(2+).

The protein resides in the cytoplasm. The catalysed reaction is 5-(methylsulfanyl)-D-ribulose 1-phosphate = 5-methylsulfanyl-2,3-dioxopentyl phosphate + H2O. The protein operates within amino-acid biosynthesis; L-methionine biosynthesis via salvage pathway; L-methionine from S-methyl-5-thio-alpha-D-ribose 1-phosphate: step 2/6. In terms of biological role, catalyzes the dehydration of methylthioribulose-1-phosphate (MTRu-1-P) into 2,3-diketo-5-methylthiopentyl-1-phosphate (DK-MTP-1-P). The chain is Methylthioribulose-1-phosphate dehydratase from Penicillium rubens (strain ATCC 28089 / DSM 1075 / NRRL 1951 / Wisconsin 54-1255) (Penicillium chrysogenum).